Reading from the N-terminus, the 545-residue chain is Squalene monooxygenase SE2 (545 aa).

A helical transmembrane segment spans residues glutamate 12–leucine 32. FAD is bound by residues valine 86–alanine 87, glutamate 106–arginine 107, arginine 114, arginine 185, valine 201, aspartate 364, and methionine 377. 2 helical membrane-spanning segments follow: residues leucine 475–proline 495 and methionine 500–serine 520.

It belongs to the squalene monooxygenase family. FAD serves as cofactor. In terms of tissue distribution, weak expression in petioles and flower buds and barely detectable in roots and leaves. In petioles, preferentially observed in vascular bundle tissue (phloem cells and parenchymatous cells near xylem) and resin ducts.

It is found in the membrane. It carries out the reaction squalene + reduced [NADPH--hemoprotein reductase] + O2 = (S)-2,3-epoxysqualene + oxidized [NADPH--hemoprotein reductase] + H2O + H(+). It participates in terpene metabolism; lanosterol biosynthesis; lanosterol from farnesyl diphosphate: step 2/3. Component of the triterpene saponins (e.g. ginsenosides or panaxosides) and phytosterols biosynthetic pathways. Catalyzes the first oxygenation step in sterol biosynthesis and is suggested to be one of the rate-limiting enzymes in this pathway. The chain is Squalene monooxygenase SE2 from Panax ginseng (Korean ginseng).